Reading from the N-terminus, the 346-residue chain is D-amino-acid oxidase (346 aa).

FAD contacts are provided by glycine 22, isoleucine 24, threonine 52, threonine 53, serine 54, alanine 58, alanine 59, leucine 60, and threonine 187. Tyrosine 227 and arginine 284 together coordinate D-proline. Residues tyrosine 227 and arginine 284 each coordinate D-serine. Arginine 284, glycine 311, glycine 312, glycine 314, and threonine 316 together coordinate FAD. Arginine 284 contacts D-dopa. Glycine 312 serves as a coordination point for D-proline. Glycine 312 is a D-serine binding site. Position 312 (glycine 312) interacts with D-dopa. The Microbody targeting signal signature appears at 344 to 346; the sequence is SKL.

Belongs to the DAMOX/DASOX family. Requires FAD as cofactor.

Its subcellular location is the peroxisome matrix. The enzyme catalyses a D-alpha-amino acid + O2 + H2O = a 2-oxocarboxylate + H2O2 + NH4(+). The catalysed reaction is D-serine + O2 + H2O = 3-hydroxypyruvate + H2O2 + NH4(+). It catalyses the reaction D-phenylalanine + O2 + H2O = 3-phenylpyruvate + H2O2 + NH4(+). It carries out the reaction D-alanine + O2 + H2O = pyruvate + H2O2 + NH4(+). The enzyme catalyses D-arginine + O2 + H2O = 5-guanidino-2-oxopentanoate + H2O2 + NH4(+). The catalysed reaction is D-methionine + O2 + H2O = 4-methylsulfanyl-2-oxobutanoate + H2O2 + NH4(+). It catalyses the reaction D-ornithine + O2 + H2O = 5-amino-2-oxopentanoate + H2O2 + NH4(+). It carries out the reaction D-leucine + O2 + H2O = 4-methyl-2-oxopentanoate + H2O2 + NH4(+). The enzyme catalyses D-lysine + O2 + H2O = 6-amino-2-oxohexanoate + H2O2 + NH4(+). The catalysed reaction is D-proline + O2 = 1-pyrroline-2-carboxylate + H2O2. It catalyses the reaction D-valine + O2 + H2O = 3-methyl-2-oxobutanoate + H2O2 + NH4(+). It carries out the reaction D-histidine + O2 + H2O = 3-(imidazol-5-yl)pyruvate + H2O2 + NH4(+). Its function is as follows. Catalyzes the oxidative deamination of D-amino acids with broad substrate specificity. Has low in vitro and no in vivo activity on D-serine; primary D-serine degradation is performed by the D-serine dehydratase dsd. The chain is D-amino-acid oxidase (ddo-1) from Dictyostelium discoideum (Social amoeba).